The following is a 312-amino-acid chain: Lipoyl synthase (312 aa).

[4Fe-4S] cluster-binding residues include C51, C56, C62, C77, C81, C84, and S290. Residues 63–280 (WSRKTATYLA…RTIGTSLGLF (218 aa)) form the Radical SAM core domain.

The protein belongs to the radical SAM superfamily. Lipoyl synthase family. [4Fe-4S] cluster is required as a cofactor.

It localises to the cytoplasm. It catalyses the reaction [[Fe-S] cluster scaffold protein carrying a second [4Fe-4S](2+) cluster] + N(6)-octanoyl-L-lysyl-[protein] + 2 oxidized [2Fe-2S]-[ferredoxin] + 2 S-adenosyl-L-methionine + 4 H(+) = [[Fe-S] cluster scaffold protein] + N(6)-[(R)-dihydrolipoyl]-L-lysyl-[protein] + 4 Fe(3+) + 2 hydrogen sulfide + 2 5'-deoxyadenosine + 2 L-methionine + 2 reduced [2Fe-2S]-[ferredoxin]. It functions in the pathway protein modification; protein lipoylation via endogenous pathway; protein N(6)-(lipoyl)lysine from octanoyl-[acyl-carrier-protein]: step 2/2. Catalyzes the radical-mediated insertion of two sulfur atoms into the C-6 and C-8 positions of the octanoyl moiety bound to the lipoyl domains of lipoate-dependent enzymes, thereby converting the octanoylated domains into lipoylated derivatives. This chain is Lipoyl synthase, found in Chlamydia caviae (strain ATCC VR-813 / DSM 19441 / 03DC25 / GPIC) (Chlamydophila caviae).